A 146-amino-acid polypeptide reads, in one-letter code: Large ribosomal subunit protein uL15 (146 aa).

Residues Met-1–Gln-54 form a disordered region. Composition is skewed to gly residues over residues Arg-21–Ala-31 and Ser-42–Gly-52.

This sequence belongs to the universal ribosomal protein uL15 family. As to quaternary structure, part of the 50S ribosomal subunit.

Its function is as follows. Binds to the 23S rRNA. This is Large ribosomal subunit protein uL15 from Clostridium botulinum (strain Alaska E43 / Type E3).